The following is a 258-amino-acid chain: C1q-related factor (258 aa).

The first 16 residues, 1-16 (MLLVLVVLIPVLVSSG), serve as a signal peptide directing secretion. The interval 39-120 (GPGAGARSDG…PGSGGSGAIS (82 aa)) is disordered. The segment covering 67-77 (GPQGKPGRTGK) has biased composition (low complexity). The Collagen-like domain maps to 67 to 115 (GPQGKPGRTGKPGPPGPPGDRGPPGPVGPPGEKGEPGKPGPPGLPGSGG). Positions 78–95 (PGPPGPPGDRGPPGPVGP) are enriched in pro residues. The C1q domain maps to 125–258 (TTVPRVAFYA…TFSGFIIYSD (134 aa)).

Interacts with ADGRB3. Forms heterooligomers with C1QL4, when proteins are coexpressed; this interaction does not occur after secretion. As to expression, expressed in brainstem. More abundant in areas of the nervous system involved in motor function, such as the Purkinje cells of the cerebellum, the accessory olivary nucleus, the pons and the red nucleus.

The protein localises to the secreted. May regulate the number of excitatory synapses that are formed on hippocampus neurons. Has no effect on inhibitory synapses. The protein is C1q-related factor (C1ql1) of Mus musculus (Mouse).